The chain runs to 286 residues: Pantothenate synthetase (286 aa).

32–39 serves as a coordination point for ATP; it reads MGALHEGH. The active-site Proton donor is the H39. Q63 lines the (R)-pantoate pocket. Residue Q63 coordinates beta-alanine. 149–152 provides a ligand contact to ATP; the sequence is GEKD. Q155 is a binding site for (R)-pantoate. ATP-binding positions include L178 and 186–189; that span reads SSSR.

This sequence belongs to the pantothenate synthetase family. As to quaternary structure, homodimer.

It is found in the cytoplasm. It carries out the reaction (R)-pantoate + beta-alanine + ATP = (R)-pantothenate + AMP + diphosphate + H(+). The protein operates within cofactor biosynthesis; (R)-pantothenate biosynthesis; (R)-pantothenate from (R)-pantoate and beta-alanine: step 1/1. In terms of biological role, catalyzes the condensation of pantoate with beta-alanine in an ATP-dependent reaction via a pantoyl-adenylate intermediate. In Bartonella quintana (strain Toulouse) (Rochalimaea quintana), this protein is Pantothenate synthetase.